A 796-amino-acid polypeptide reads, in one-letter code: Histone-lysine N-methyltransferase PRDM9 (796 aa).

Positions 1–23 (MSRTMNTNKPEENSTEGDAGKLE) are disordered. The region spanning 27–90 (KVKDEFKDIS…QRQAIKPQIN (64 aa)) is the KRAB-related domain. The segment at 149–172 (SEHAQKPVCSPEEGNTSGQHFGKK) is disordered. Zn(2+)-binding residues include Cys-209, Cys-212, Cys-220, and His-223. The SET domain maps to 248–362 (PGLRIGPSGI…PGRELLVWYG (115 aa)). S-adenosyl-L-methionine is bound by residues 260–262 (AGL), Tyr-295, and 324–325 (NC). Position 292 to 298 (292 to 298 (NSGYSWL)) interacts with substrate. Tyr-361 is a substrate binding site. Residue Lys-372 is modified to N6,N6,N6-trimethyllysine; alternate. Lys-372 is modified (N6-methyllysine; alternate). 2 positions are modified to N6-methyllysine: Lys-376 and Lys-378. The C2H2-type 1 zinc finger occupies 392-415 (HPCFLCSLAFSSQKFLTQHVEWNH). Residues Cys-394, Cys-397, His-410, and His-415 each contribute to the Zn(2+) site. The segment covering 443 to 457 (FDSQNKNDKASNEVK) has biased composition (basic and acidic residues). The interval 443-497 (FDSQNKNDKASNEVKRKSKPRHKWTRQRISTAFSSTLKEQMRSEESKRTVEEELR) is disordered. Positions 458 to 468 (RKSKPRHKWTR) are enriched in basic residues. Polar residues predominate over residues 469-480 (QRISTAFSSTLK). Residues 481–497 (EQMRSEESKRTVEEELR) show a composition bias toward basic and acidic residues. The segment at 522–540 (QCGQCFSDKSNVSEHQRTH) adopts a C2H2-type 2; degenerate zinc-finger fold. C2H2-type zinc fingers lie at residues 546 to 568 (YICR…QRTH), 574 to 596 (YICR…QRTH), 602 to 624 (YICR…QRTH), 630 to 652 (YICR…QRTH), 658 to 680 (YICR…QRTH), 686 to 708 (YICR…LRTH), 714 to 736 (YICR…QRTH), 742 to 764 (YICR…QRTH), and 770 to 792 (YICR…QRTH). Positions 716, 719, 732, 736, 744, 747, 760, 764, 772, 775, 788, and 792 each coordinate Zn(2+).

This sequence belongs to the class V-like SAM-binding methyltransferase superfamily. In terms of assembly, homodimer. Interacts with EHMT2 and CDYL; interaction only takes place when PRDM9 is bound to hotspot DNA. Interacts with CXXC1; this interaction does not link PRDM9-activated recombination hotspot sites with DSB machinery and is not required for the hotspot recognition pathway. Forms a complex with EWSR1, REC8, SYCP3 and SYCP1; complex formation is dependent of phosphorylated form of REC8 and requires PRDM9 bound to hotspot DNA; EWSR1 joins PRDM9 with the chromosomal axis through REC8. Mono-methylated; automethylated. Tri-methylated; automethylated. Mono-methylation is predominant; automethylation is lower and slower than H3 peptide methylation and is in a highest S-adenosyl-L-methionine concentration-dependent. There are two major sites for automethylation at Lys-372 and Lys-378. Lysines can be simultaneously methylated, such as Lys-372(me3)/Lys-376(me1), Lys-372(me1)/Lys-378(me1) and Lys-372(me1)/Lys-376(me1)/Lys-378(me1). Automethylation is an intramolecular (cis) process.

The protein resides in the nucleus. It is found in the chromosome. The enzyme catalyses L-lysyl-[protein] + S-adenosyl-L-methionine = N(6)-methyl-L-lysyl-[protein] + S-adenosyl-L-homocysteine + H(+). It catalyses the reaction N(6)-methyl-L-lysyl-[protein] + S-adenosyl-L-methionine = N(6),N(6)-dimethyl-L-lysyl-[protein] + S-adenosyl-L-homocysteine + H(+). The catalysed reaction is L-lysyl(4)-[histone H3] + 3 S-adenosyl-L-methionine = N(6),N(6),N(6)-trimethyl-L-lysyl(4)-[histone H3] + 3 S-adenosyl-L-homocysteine + 3 H(+). It carries out the reaction L-lysyl(36)-[histone H3] + 3 S-adenosyl-L-methionine = N(6),N(6),N(6)-trimethyl-L-lysyl(36)-[histone H3] + 3 S-adenosyl-L-homocysteine + 3 H(+). The enzyme catalyses L-lysyl(9)-[histone H3] + 3 S-adenosyl-L-methionine = N(6),N(6),N(6)-trimethyl-L-lysyl(9)-[histone H3] + 3 S-adenosyl-L-homocysteine + 3 H(+). It catalyses the reaction L-lysyl(20)-[histone H4] + S-adenosyl-L-methionine = N(6)-methyl-L-lysyl(20)-[histone H4] + S-adenosyl-L-homocysteine + H(+). The catalysed reaction is N(6)-methyl-L-lysyl(20)-[histone H4] + S-adenosyl-L-methionine = N(6),N(6)-dimethyl-L-lysyl(20)-[histone H4] + S-adenosyl-L-homocysteine + H(+). In terms of biological role, histone methyltransferase that sequentially mono-, di-, and tri-methylates both 'Lys-4' (H3K4) and 'Lys-36' (H3K36) of histone H3 to produce respectively trimethylated 'Lys-4' (H3K4me3) and trimethylated 'Lys-36' (H3K36me3) histone H3 and plays a key role in meiotic prophase by determining hotspot localization thereby promoting meiotic recombination. Can also methylate all four core histones with H3 being the best substrate and the most highly modified. Is also able, on one hand, to mono and di-methylate H4K20 and on other hand to trimethylate H3K9 with the di-methylated H3K9 as the best substrate. During meiotic prophase, binds specific DNA sequences through its zinc finger domains thereby determining hotspot localization where it promotes local H3K4me3 and H3K36me3 enrichment on the same nucleosomes through its histone methyltransferase activity. Thereby promotes double-stranded breaks (DSB) formation, at this subset of PRDM9-binding sites, that initiates meiotic recombination for the proper meiotic progression. During meiotic progression hotspot-bound PRDM9 interacts with several complexes; in early leptonema binds CDYL and EHMT2 followed by EWSR1 and CXXC1 by the end of leptonema. EWSR1 joins PRDM9 with the chromosomal axis through REC8. In this way, controls the DSB repair pathway, pairing of homologous chromosomes and sex body formation. Moreover plays a central role in the transcriptional activation of genes during early meiotic prophase thanks to H3K4me3 and H3K36me3 enrichment that represents a specific tag for epigenetic transcriptional activation. In addition performs automethylation. Acetylation and phosphorylation of histone H3 attenuate or prevent histone H3 methylation. The protein is Histone-lysine N-methyltransferase PRDM9 of Rattus norvegicus (Rat).